Reading from the N-terminus, the 441-residue chain is MSNVTHQPKIGFVSLGCPKNLVDSERILTELRTEGYDVVPRYDDADMVIVNTCGFIDSAVQESLEAIGEALNENGKVIVTGCLGAKEDQIREVHPKVLEITGPHSYEQVLQHVHHYVPKPKHNPFLSLVPEQGVKLTPRHYAYLKISEGCNHRCTFCIIPSMRGDLVSRPIGDVLSEAKRLVDAGVKEILVISQDTSAYGVDVKHRTGFHNGEPVKTSMASLCEQLSKLGVWTRLHYVYPYPHVDDVIPLMAEGKILPYLDIPLQHASPRILKLMKRPGSVDRQLARIKQWRDICPELTLRSTFIVGFPGETEEDFQMLLDFLKEARLDRVGCFKYSPVEGAGANELPDQVPEEVKEERWNRFMQLQQQISAERLQEKVGREILVIVDEVDEEGAIGRSMADAPEIDGAVYLNGETNVKPGDIVRVKVENADEYDLWGSRV.

One can recognise an MTTase N-terminal domain in the interval 8-118 (PKIGFVSLGC…VLQHVHHYVP (111 aa)). The [4Fe-4S] cluster site is built by C17, C53, C82, C150, C154, and C157. The Radical SAM core domain occupies 136 to 373 (LTPRHYAYLK…MQLQQQISAE (238 aa)). The region spanning 376–441 (QEKVGREILV…DEYDLWGSRV (66 aa)) is the TRAM domain.

This sequence belongs to the methylthiotransferase family. RimO subfamily. [4Fe-4S] cluster serves as cofactor.

It localises to the cytoplasm. The catalysed reaction is L-aspartate(89)-[ribosomal protein uS12]-hydrogen + (sulfur carrier)-SH + AH2 + 2 S-adenosyl-L-methionine = 3-methylsulfanyl-L-aspartate(89)-[ribosomal protein uS12]-hydrogen + (sulfur carrier)-H + 5'-deoxyadenosine + L-methionine + A + S-adenosyl-L-homocysteine + 2 H(+). Its function is as follows. Catalyzes the methylthiolation of an aspartic acid residue of ribosomal protein uS12. The protein is Ribosomal protein uS12 methylthiotransferase RimO of Salmonella arizonae (strain ATCC BAA-731 / CDC346-86 / RSK2980).